A 686-amino-acid polypeptide reads, in one-letter code: Methionine--tRNA ligase (686 aa).

Positions 22 to 32 (PYANGPIHLGH) match the 'HIGH' region motif. Zn(2+)-binding residues include C153, C156, C166, and C169. The short motif at 337-341 (KMSKS) is the 'KMSKS' region element. ATP is bound at residue K340. Residues 547 to 573 (MLEDSKESTPAPAAAKPKKAATQKADA) form a disordered region. One can recognise a tRNA-binding domain in the interval 584-686 (DFLKVKLRVA…SGAEPGMEVR (103 aa)).

Belongs to the class-I aminoacyl-tRNA synthetase family. MetG type 1 subfamily. As to quaternary structure, homodimer. Zn(2+) serves as cofactor.

The protein resides in the cytoplasm. It catalyses the reaction tRNA(Met) + L-methionine + ATP = L-methionyl-tRNA(Met) + AMP + diphosphate. Functionally, is required not only for elongation of protein synthesis but also for the initiation of all mRNA translation through initiator tRNA(fMet) aminoacylation. In Alcanivorax borkumensis (strain ATCC 700651 / DSM 11573 / NCIMB 13689 / SK2), this protein is Methionine--tRNA ligase.